The sequence spans 283 residues: 5'-nucleotidase SurE (283 aa).

Residues Asp14, Asp15, Ser47, and Asn105 each contribute to the a divalent metal cation site.

This sequence belongs to the SurE nucleotidase family. The cofactor is a divalent metal cation.

The protein localises to the cytoplasm. It carries out the reaction a ribonucleoside 5'-phosphate + H2O = a ribonucleoside + phosphate. Its function is as follows. Nucleotidase that shows phosphatase activity on nucleoside 5'-monophosphates. The polypeptide is 5'-nucleotidase SurE (Chlamydia trachomatis serovar L2 (strain ATCC VR-902B / DSM 19102 / 434/Bu)).